The sequence spans 122 residues: Small ribosomal subunit protein uS13 (122 aa).

Positions 95–122 are disordered; the sequence is GLPVRGQRTRTNARTRKGPRKTVAKKKK.

The protein belongs to the universal ribosomal protein uS13 family. As to quaternary structure, part of the 30S ribosomal subunit. Forms a loose heterodimer with protein S19. Forms two bridges to the 50S subunit in the 70S ribosome.

Its function is as follows. Located at the top of the head of the 30S subunit, it contacts several helices of the 16S rRNA. In the 70S ribosome it contacts the 23S rRNA (bridge B1a) and protein L5 of the 50S subunit (bridge B1b), connecting the 2 subunits; these bridges are implicated in subunit movement. Contacts the tRNAs in the A and P-sites. In Thermoanaerobacter pseudethanolicus (strain ATCC 33223 / 39E) (Clostridium thermohydrosulfuricum), this protein is Small ribosomal subunit protein uS13.